Consider the following 419-residue polypeptide: Haloacid dehalogenase-like hydrolase domain-containing 5 (419 aa).

The N-terminal stretch at 1 to 15 (MAALAGLGVLGAGRH) is a signal peptide.

It belongs to the HAD-like hydrolase superfamily.

The polypeptide is Haloacid dehalogenase-like hydrolase domain-containing 5 (Mus musculus (Mouse)).